The primary structure comprises 165 residues: Glycine cleavage system H protein, mitochondrial (165 aa).

The region spanning 57 to 139 is the Lipoyl-binding domain; the sequence is NAIVGISSYA…YEKGWLFKVD (83 aa). The residue at position 98 (Lys98) is an N6-lipoyllysine.

It belongs to the GcvH family. The glycine cleavage system is composed of four proteins: P, T, L and H. It depends on (R)-lipoate as a cofactor.

The protein resides in the mitochondrion. Its function is as follows. The glycine cleavage system catalyzes the degradation of glycine. The H protein shuttles the methylamine group of glycine from the P protein to the T protein. In Drosophila melanogaster (Fruit fly), this protein is Glycine cleavage system H protein, mitochondrial (ppl).